The following is a 207-amino-acid chain: Ribonuclease HII (207 aa).

The RNase H type-2 domain occupies 20–207 (QLFAGVDEVG…KPVKRVLGIE (188 aa)). Residues Asp-26, Glu-27, and Asp-118 each contribute to the a divalent metal cation site.

It belongs to the RNase HII family. It depends on Mn(2+) as a cofactor. Mg(2+) serves as cofactor.

It is found in the cytoplasm. The catalysed reaction is Endonucleolytic cleavage to 5'-phosphomonoester.. Functionally, endonuclease that specifically degrades the RNA of RNA-DNA hybrids. In Aliivibrio fischeri (strain MJ11) (Vibrio fischeri), this protein is Ribonuclease HII.